The sequence spans 342 residues: tRNA N6-adenosine threonylcarbamoyltransferase (342 aa).

Residues His-112 and His-116 each coordinate Fe cation. Residues 134–138 (IVSGG), Asp-167, Gly-180, and Asn-278 contribute to the substrate site. A Fe cation-binding site is contributed by Asp-306.

This sequence belongs to the KAE1 / TsaD family. Requires Fe(2+) as cofactor.

Its subcellular location is the cytoplasm. The enzyme catalyses L-threonylcarbamoyladenylate + adenosine(37) in tRNA = N(6)-L-threonylcarbamoyladenosine(37) in tRNA + AMP + H(+). Its function is as follows. Required for the formation of a threonylcarbamoyl group on adenosine at position 37 (t(6)A37) in tRNAs that read codons beginning with adenine. Is involved in the transfer of the threonylcarbamoyl moiety of threonylcarbamoyl-AMP (TC-AMP) to the N6 group of A37, together with TsaE and TsaB. TsaD likely plays a direct catalytic role in this reaction. The chain is tRNA N6-adenosine threonylcarbamoyltransferase from Anaplasma phagocytophilum (strain HZ).